Consider the following 1288-residue polypeptide: 5-oxoprolinase (1288 aa).

A Phosphothreonine modification is found at threonine 151. Residues 1249 to 1269 (GGGGYGDPEDPAPLPGSPLQP) are disordered. The residue at position 1265 (serine 1265) is a Phosphoserine.

It belongs to the oxoprolinase family. As to quaternary structure, homodimer. As to expression, expressed in coronary artery and kidney.

The protein resides in the cytoplasm. The protein localises to the cytosol. The catalysed reaction is 5-oxo-L-proline + ATP + 2 H2O = L-glutamate + ADP + phosphate + H(+). Catalyzes the cleavage of 5-oxo-L-proline to form L-glutamate coupled to the hydrolysis of ATP to ADP and inorganic phosphate. This Bos taurus (Bovine) protein is 5-oxoprolinase (OPLAH).